A 327-amino-acid chain; its full sequence is Malate dehydrogenase (327 aa).

Position 11–17 (11–17 (GAAGQIS)) interacts with NAD(+). Arg-92 and Arg-98 together coordinate substrate. NAD(+) is bound by residues Asn-105, Gln-112, and 129–131 (VGN). Substrate contacts are provided by Asn-131 and Arg-162. Residue His-187 is the Proton acceptor of the active site.

This sequence belongs to the LDH/MDH superfamily. MDH type 2 family.

The catalysed reaction is (S)-malate + NAD(+) = oxaloacetate + NADH + H(+). Its function is as follows. Catalyzes the reversible oxidation of malate to oxaloacetate. The chain is Malate dehydrogenase from Nitrosomonas europaea (strain ATCC 19718 / CIP 103999 / KCTC 2705 / NBRC 14298).